Consider the following 282-residue polypeptide: NH(3)-dependent NAD(+) synthetase (282 aa).

An ATP-binding site is contributed by 51 to 58 (GISGGVDS). Residue Asp57 participates in Mg(2+) binding. Arg148 contacts deamido-NAD(+). Thr168 contacts ATP. Glu173 is a Mg(2+) binding site. Lys181 and Asp188 together coordinate deamido-NAD(+). Positions 197 and 219 each coordinate ATP. 268–269 (HK) is a deamido-NAD(+) binding site.

This sequence belongs to the NAD synthetase family. Homodimer.

The enzyme catalyses deamido-NAD(+) + NH4(+) + ATP = AMP + diphosphate + NAD(+) + H(+). It functions in the pathway cofactor biosynthesis; NAD(+) biosynthesis; NAD(+) from deamido-NAD(+) (ammonia route): step 1/1. Its function is as follows. Catalyzes the ATP-dependent amidation of deamido-NAD to form NAD. Uses ammonia as a nitrogen source. This chain is NH(3)-dependent NAD(+) synthetase, found in Burkholderia ambifaria (strain MC40-6).